The sequence spans 494 residues: MKKQAFSSEQYLNLQRDHILERINQFDGKLYLEFGGKMLEDFHAARVLPGYEPDNKIKLLQELKEQVEVVIAINASNIEHSKARGDLGISYDQEVLRLIDKFNELGIFVGSVVITQYAGQPAADAFRNQLEKNGIDSYLHYPIKGYPTDMDHIISPEGMGKNDYIKTSRNLIVVTAPGPGSGKLATCMSNMYHDQINGIKSGYAKFETFPVWNLPLHHPVNLAYEAATADLDDVNMIDPFHLQTYGETTVNYNRDIEIFPVLKRMLERILGKSPYASPTDMGVNMVGFAITDDEAAVEASKQEIIRRYYQTVLDFKAEKVSEAAVKKIELLMNDLGITPADRKVAVVARQKAEETGGPALAFELPNGEIVTGKNSELFGPTAAALINAIKKSADIAKEVKLIEPEVVKPIQGLKIDHLGSRNPRLHSNEILIALAITATENPDAARAMEELGNLKGSEAHSTIILTDEDKNVLRKLGINVTFDPYYQYDRLYRK.

It belongs to the UPF0371 family.

In Streptococcus pneumoniae (strain CGSP14), this protein is UPF0371 protein SPCG_0344.